A 274-amino-acid polypeptide reads, in one-letter code: Indole-3-glycerol phosphate synthase (274 aa).

The protein belongs to the TrpC family.

It catalyses the reaction 1-(2-carboxyphenylamino)-1-deoxy-D-ribulose 5-phosphate + H(+) = (1S,2R)-1-C-(indol-3-yl)glycerol 3-phosphate + CO2 + H2O. Its pathway is amino-acid biosynthesis; L-tryptophan biosynthesis; L-tryptophan from chorismate: step 4/5. This chain is Indole-3-glycerol phosphate synthase, found in Kineococcus radiotolerans (strain ATCC BAA-149 / DSM 14245 / SRS30216).